Consider the following 208-residue polypeptide: MVLDELISEFDRGLRSLTGISRMSRPVPAPADAPDAELTPAERTHAAGLMRVNHVGEVCAQALYQAQKLTARTASAKAMFEEAAREEEDHLAWTAHRLKELDSRPSLLNPLWYAGALAIGVAAGALGDKVSLGFMAETERQVESHLEGHMSELPATDTASRAIVDQMRIDEVKHGKAATDAGGIELPLPARMLMRAASKVMTSTAYYL.

6 residues coordinate Fe cation: glutamate 57, glutamate 87, histidine 90, glutamate 139, glutamate 171, and histidine 174.

Belongs to the COQ7 family. The cofactor is Fe cation.

The protein resides in the cell membrane. The catalysed reaction is a 5-methoxy-2-methyl-3-(all-trans-polyprenyl)benzene-1,4-diol + AH2 + O2 = a 3-demethylubiquinol + A + H2O. Its pathway is cofactor biosynthesis; ubiquinone biosynthesis. Functionally, catalyzes the hydroxylation of 2-nonaprenyl-3-methyl-6-methoxy-1,4-benzoquinol during ubiquinone biosynthesis. This chain is 3-demethoxyubiquinol 3-hydroxylase, found in Burkholderia cenocepacia (strain ATCC BAA-245 / DSM 16553 / LMG 16656 / NCTC 13227 / J2315 / CF5610) (Burkholderia cepacia (strain J2315)).